A 219-amino-acid polypeptide reads, in one-letter code: Kynurenine formamidase (219 aa).

W28 contributes to the substrate binding site. Zn(2+)-binding residues include H58, H62, and D64. Residue H68 is the Proton donor/acceptor of the active site. Residues H170 and E182 each contribute to the Zn(2+) site.

It belongs to the Cyclase 1 superfamily. KynB family. Homodimer. Zn(2+) serves as cofactor.

It carries out the reaction N-formyl-L-kynurenine + H2O = L-kynurenine + formate + H(+). It functions in the pathway amino-acid degradation; L-tryptophan degradation via kynurenine pathway; L-kynurenine from L-tryptophan: step 2/2. In terms of biological role, catalyzes the hydrolysis of N-formyl-L-kynurenine to L-kynurenine, the second step in the kynurenine pathway of tryptophan degradation. This Cupriavidus pinatubonensis (strain JMP 134 / LMG 1197) (Cupriavidus necator (strain JMP 134)) protein is Kynurenine formamidase.